The following is a 323-amino-acid chain: V-type ATP synthase subunit C (323 aa).

Belongs to the V-ATPase V0D/AC39 subunit family.

Produces ATP from ADP in the presence of a proton gradient across the membrane. This chain is V-type ATP synthase subunit C (atpC), found in Thermus thermophilus (strain ATCC 27634 / DSM 579 / HB8).